Here is a 486-residue protein sequence, read N- to C-terminus: Kynureninase 1 (486 aa).

The disordered stretch occupies residues 53-72; it reads DLKRTTLDPNQEPEHSPTPS. Pyridoxal 5'-phosphate is bound by residues Leu146, Thr147, 174–177, Ser231, Asp260, His263, and Tyr285; that span reads FPSD. Lys286 is subject to N6-(pyridoxal phosphate)lysine. Residues Trp326 and Asn354 each contribute to the pyridoxal 5'-phosphate site.

This sequence belongs to the kynureninase family. As to quaternary structure, homodimer. Pyridoxal 5'-phosphate serves as cofactor.

The protein localises to the cytoplasm. The enzyme catalyses L-kynurenine + H2O = anthranilate + L-alanine + H(+). It catalyses the reaction 3-hydroxy-L-kynurenine + H2O = 3-hydroxyanthranilate + L-alanine + H(+). It participates in amino-acid degradation; L-kynurenine degradation; L-alanine and anthranilate from L-kynurenine: step 1/1. It functions in the pathway cofactor biosynthesis; NAD(+) biosynthesis; quinolinate from L-kynurenine: step 2/3. Its function is as follows. Catalyzes the cleavage of L-kynurenine (L-Kyn) and L-3-hydroxykynurenine (L-3OHKyn) into anthranilic acid (AA) and 3-hydroxyanthranilic acid (3-OHAA), respectively. In Aspergillus clavatus (strain ATCC 1007 / CBS 513.65 / DSM 816 / NCTC 3887 / NRRL 1 / QM 1276 / 107), this protein is Kynureninase 1 (bna5-1).